The following is a 402-amino-acid chain: Type II NADH:quinone oxidoreductase (402 aa).

FAD is bound by residues 12-16 (GAGYA), 39-40 (NK), and Val-83. Glu-172 is an active-site residue. Residues Asp-302, 319–320 (AQ), and Lys-379 each bind FAD.

Belongs to the NADH dehydrogenase family. It depends on FAD as a cofactor.

It localises to the cell membrane. It carries out the reaction a quinone + NADH + H(+) = a quinol + NAD(+). Alternative, nonproton pumping NADH:quinone oxidoreductase that delivers electrons to the respiratory chain by oxidation of NADH and reduction of quinones, and contributes to the regeneration of NAD(+). This chain is Type II NADH:quinone oxidoreductase, found in Staphylococcus aureus (strain MSSA476).